Consider the following 757-residue polypeptide: Dapper homolog 2 (757 aa).

Positions 1–281 (MWAPSGQGPA…QSPLFALPKE (281 aa)) are inhibition of Nodal signaling. A coiled-coil region spans residues 55–107 (RGQELRLEAALTALREQLSRLRRQDAGLKTHLDQLDQQISELQLDVSRSSCEA). Disordered regions lie at residues 486–540 (RRRV…CSES), 584–684 (RWQS…EGCF), and 696–728 (AEAGQGGWAWPRVPPQQPSRAPGNTRPPLPPVP). Composition is skewed to basic and acidic residues over residues 505–516 (ERQRVTERDPSR) and 631–644 (ACARCESDPSEHSA). A compositionally biased stretch (polar residues) spans 645 to 656 (DCTSLYHSTIAE). Basic and acidic residues predominate over residues 664–673 (SDHTANRFGD). A PDZ-binding motif is present at residues 754 to 757 (MTMV).

The protein belongs to the dapper family. As to quaternary structure, can form homodimers and heterodimers with DACT1 or DACT3. Interacts with CSNK1D, PKA catalytic subunit, PKC-type kinase, CSNK2B, DVL1, DVL2, DVL3, VANGL1, VANGL2, TGFBR1, CTNNB1, CTNND2, CTNND1, LEF1, TCF7, TCF7L1 and HDAC1. As to expression, expressed in kidney (inner medullary collecting duct). Expressed in epidermal keratinocytes and hair follicles.

Involved in regulation of intracellular signaling pathways during development. Negatively regulates the Nodal signaling pathway, possibly by promoting the lysosomal degradation of Nodal receptors, such as TGFBR1. May be involved in control of the morphogenetic behavior of kidney ureteric bud cells by keeping cells epithelial and restraining their mesenchymal character. May play an inhibitory role in the re-epithelialization of skin wounds by attenuating TGF-beta signaling. The polypeptide is Dapper homolog 2 (Dact2) (Mus musculus (Mouse)).